Consider the following 507-residue polypeptide: 2,3-bisphosphoglycerate-independent phosphoglycerate mutase (507 aa).

Positions 13 and 63 each coordinate Mn(2+). The active-site Phosphoserine intermediate is the Ser63. Residues His122, 152–153 (RD), Arg184, Arg190, 256–259 (RADR), and Lys330 contribute to the substrate site. Residues Asp397, His401, Asp438, His439, and His457 each contribute to the Mn(2+) site.

Belongs to the BPG-independent phosphoglycerate mutase family. In terms of assembly, monomer. Mn(2+) serves as cofactor.

It carries out the reaction (2R)-2-phosphoglycerate = (2R)-3-phosphoglycerate. Its pathway is carbohydrate degradation; glycolysis; pyruvate from D-glyceraldehyde 3-phosphate: step 3/5. Functionally, catalyzes the interconversion of 2-phosphoglycerate and 3-phosphoglycerate. The protein is 2,3-bisphosphoglycerate-independent phosphoglycerate mutase of Chromobacterium violaceum (strain ATCC 12472 / DSM 30191 / JCM 1249 / CCUG 213 / NBRC 12614 / NCIMB 9131 / NCTC 9757 / MK).